Here is a 539-residue protein sequence, read N- to C-terminus: G protein-coupled receptor associated sorting protein 3 (539 aa).

Over residues 1–10 (MTGSKNKARA) the composition is skewed to basic residues. Disordered regions lie at residues 1-112 (MTGS…NWFW) and 134-172 (VAKC…EENV). Composition is skewed to basic and acidic residues over residues 66 to 80 (VVAE…ESKA) and 88 to 106 (FNHR…DKPS). A compositionally biased stretch (polar residues) spans 134–146 (VAKCENKPSTSIQ).

This sequence belongs to the GPRASP family. Homodimer.

Its subcellular location is the cytoplasm. The protein localises to the nucleus. In terms of biological role, survival and differentiation promoting protein that plays a role in the regulation of neurosynaptogenesis. Induces phosphatase PP2A activity which results in APP dephosphorylation and inhibits BACE1-mediated processing of APP. The protein is G protein-coupled receptor associated sorting protein 3 (Gprasp3) of Mus musculus (Mouse).